A 343-amino-acid polypeptide reads, in one-letter code: Heat-inducible transcription repressor HrcA (343 aa).

The protein belongs to the HrcA family.

Negative regulator of class I heat shock genes (grpE-dnaK-dnaJ and groELS operons). Prevents heat-shock induction of these operons. The chain is Heat-inducible transcription repressor HrcA from Bacillus cytotoxicus (strain DSM 22905 / CIP 110041 / 391-98 / NVH 391-98).